Here is a 355-residue protein sequence, read N- to C-terminus: Probable dual-specificity RNA methyltransferase RlmN (355 aa).

The active-site Proton acceptor is E89. The Radical SAM core domain maps to 95 to 322; sequence YENRKTVCLS…KRLGVPTSIR (228 aa). An intrachain disulfide couples C102 to C333. Positions 109, 113, and 116 each coordinate [4Fe-4S] cluster. S-adenosyl-L-methionine-binding positions include 159 to 160, S191, 214 to 216, and N290; these read GE and SLH. C333 (S-methylcysteine intermediate) is an active-site residue.

The protein belongs to the radical SAM superfamily. RlmN family. Requires [4Fe-4S] cluster as cofactor.

The protein localises to the cytoplasm. The enzyme catalyses adenosine(2503) in 23S rRNA + 2 reduced [2Fe-2S]-[ferredoxin] + 2 S-adenosyl-L-methionine = 2-methyladenosine(2503) in 23S rRNA + 5'-deoxyadenosine + L-methionine + 2 oxidized [2Fe-2S]-[ferredoxin] + S-adenosyl-L-homocysteine. It carries out the reaction adenosine(37) in tRNA + 2 reduced [2Fe-2S]-[ferredoxin] + 2 S-adenosyl-L-methionine = 2-methyladenosine(37) in tRNA + 5'-deoxyadenosine + L-methionine + 2 oxidized [2Fe-2S]-[ferredoxin] + S-adenosyl-L-homocysteine. Its function is as follows. Specifically methylates position 2 of adenine 2503 in 23S rRNA and position 2 of adenine 37 in tRNAs. The sequence is that of Probable dual-specificity RNA methyltransferase RlmN from Thermus thermophilus (strain ATCC 27634 / DSM 579 / HB8).